A 283-amino-acid chain; its full sequence is 4-diphosphocytidyl-2-C-methyl-D-erythritol kinase (283 aa).

The active site involves Lys-9. An ATP-binding site is contributed by 93–103 (PIAAGLAGGSS). Asp-135 is a catalytic residue.

Belongs to the GHMP kinase family. IspE subfamily.

It carries out the reaction 4-CDP-2-C-methyl-D-erythritol + ATP = 4-CDP-2-C-methyl-D-erythritol 2-phosphate + ADP + H(+). The protein operates within isoprenoid biosynthesis; isopentenyl diphosphate biosynthesis via DXP pathway; isopentenyl diphosphate from 1-deoxy-D-xylulose 5-phosphate: step 3/6. Its function is as follows. Catalyzes the phosphorylation of the position 2 hydroxy group of 4-diphosphocytidyl-2C-methyl-D-erythritol. In Macrococcus caseolyticus (strain JCSC5402) (Macrococcoides caseolyticum), this protein is 4-diphosphocytidyl-2-C-methyl-D-erythritol kinase.